Consider the following 871-residue polypeptide: Protein pob1 (871 aa).

The SH3 domain maps to 2 to 65; that stretch reads ASQRFVIALH…PASHVELISD (64 aa). The disordered stretch occupies residues 42 to 168; it reads WWEGEDEQGN…PSSDLSNFNT (127 aa). Positions 62-80 are enriched in basic and acidic residues; sequence LISDERSDSSDSRRGKEDF. Composition is skewed to low complexity over residues 88–100 and 109–124; these read TRSS…STSS and LYSN…SILN. Residues 131-168 show a composition bias toward polar residues; the sequence is SKPSVPSNFNSMFPSSKQEGPSPLLDNQPSSDLSNFNT. A phosphoserine mark is found at Ser-224 and Ser-225. Residue Tyr-229 is modified to Phosphotyrosine. Ser-241 carries the post-translational modification Phosphoserine. The region spanning 250–313 is the SAM domain; sequence WSTEEVVEWL…LRKIQQLKDS (64 aa). Residues 329 to 343 show a composition bias toward low complexity; the sequence is ISVSQSSDSSSSIPK. Disordered stretches follow at residues 329–371 and 384–670; these read ISVS…NRPT and PDLD…KSKR. Composition is skewed to polar residues over residues 384-395 and 404-451; these read PDLDSSPSTDWN and TPSS…NSGL. Residues Ser-433, Ser-439, and Ser-440 each carry the phosphoserine modification. Thr-442 is subject to Phosphothreonine. Position 444 is a phosphoserine (Ser-444). Residues 456 to 467 are compositionally biased toward low complexity; sequence TEPISSPSTSSI. Polar residues predominate over residues 492 to 511; it reads QPSSNVPTKFTGGASESSSV. Ser-549 is subject to Phosphoserine. Over residues 549-560 the composition is skewed to low complexity; the sequence is SPSSISSRLPSS. Composition is skewed to polar residues over residues 561 to 574 and 583 to 606; these read NLEQ…TKSP and KASS…NYAT. The 111-residue stretch at 698–808 folds into the PH domain; the sequence is TADCHGWMRK…WSSAFLKATV (111 aa).

Its subcellular location is the cytoplasm. It is found in the membrane. Has a role in cell elongation and separation. The sequence is that of Protein pob1 (pob1) from Schizosaccharomyces pombe (strain 972 / ATCC 24843) (Fission yeast).